The following is a 570-amino-acid chain: Zinc finger protein 76 (570 aa).

Lysine 24 participates in a covalent cross-link: Glycyl lysine isopeptide (Lys-Gly) (interchain with G-Cter in SUMO2). A run of 3 repeats spans residues 34-45, 62-73, and 88-99. A 3 X 12 AA approximate repeats region spans residues 34–99; that stretch reads IQLEDGTTAY…LEDGSTAYIH (66 aa). 7 consecutive C2H2-type zinc fingers follow at residues 165 to 189, 195 to 219, 225 to 249, 255 to 279, 285 to 309, 315 to 339, and 345 to 368; these read FRCG…ERAH, YRCD…VRTH, YKCP…VRTH, FQCP…VRTH, YTCP…VRIH, YVCT…HVVH, and YTCS…RSAH. The tract at residues 365 to 401 is disordered; it reads RSAHGELEATEESEQALYEQQQLEAASAAEESPPPKR. Positions 379 to 395 are enriched in low complexity; it reads QALYEQQQLEAASAAEE.

It belongs to the krueppel C2H2-type zinc-finger protein family. Testis.

The protein localises to the nucleus. Functionally, may be involved in transcriptional regulation. This is Zinc finger protein 76 (ZNF76) from Homo sapiens (Human).